The sequence spans 637 residues: Neuroendocrine convertase 2 (637 aa).

A signal peptide spans 1 to 24 (MEGGCGSQWKAAGFLFCVMVFASA). Positions 25–108 (ERPVFTNHFL…QQEGFDRKKR (84 aa)) are excised as a propeptide. Positions 128-452 (QWYLFNTGQA…YGVLDAGAMV (325 aa)) constitute a Peptidase S8 domain. Residues Asp166 and His207 each act as charge relay system in the active site. 2 disulfide bridges follow: Cys224/Cys375 and Cys316/Cys346. Asn374 carries an N-linked (GlcNAc...) asparagine glycan. Ser383 acts as the Charge relay system in catalysis. Residues 460-596 (TVPERFHCVG…TLMLHGTQSA (137 aa)) enclose the P/Homo B domain. The cysteines at positions 467 and 493 are disulfide-linked. N-linked (GlcNAc...) asparagine glycosylation is found at Asn513 and Asn523.

It belongs to the peptidase S8 family. Furin subfamily.

The protein localises to the cytoplasmic vesicle. Its subcellular location is the secretory vesicle. The protein resides in the secreted. The catalysed reaction is Release of protein hormones and neuropeptides from their precursors, generally by hydrolysis of -Lys-Arg-|- bonds.. Its function is as follows. Serine endopeptidase which is involved in the processing of hormone and other protein precursors at sites comprised of pairs of basic amino acid residues. Responsible for the release of glucagon from proglucagon in pancreatic A cells. This is Neuroendocrine convertase 2 (Pcsk2) from Mus musculus (Mouse).